The following is a 39-amino-acid chain: Photosystem II reaction center protein X (39 aa).

The helical transmembrane segment at 11–31 (SLLWGAIVVVIPLSAALLFIS) threads the bilayer.

Belongs to the PsbX family. Type 1 subfamily. PSII is composed of 1 copy each of membrane proteins PsbA, PsbB, PsbC, PsbD, PsbE, PsbF, PsbH, PsbI, PsbJ, PsbK, PsbL, PsbM, PsbT, PsbX, PsbY, PsbZ, Psb30/Ycf12, at least 3 peripheral proteins of the oxygen-evolving complex and a large number of cofactors. It forms dimeric complexes.

Its subcellular location is the plastid. It localises to the cyanelle thylakoid membrane. Its function is as follows. Involved in the binding and/or turnover of quinones at the Q(B) site of photosystem II (PSII). PSII is a light-driven water plastoquinone oxidoreductase, using light energy to abstract electrons from H(2)O, generating a proton gradient subsequently used for ATP formation. The chain is Photosystem II reaction center protein X from Cyanophora paradoxa.